A 749-amino-acid polypeptide reads, in one-letter code: Protein O-mannosyl-transferase 2 (749 aa).

The interval 1–30 (MAASVVKTPKCPRRGSAKEQQSKASPKSNN) is disordered. Residues 34 to 54 (NWHWWILLASVFLITFATRFY) traverse the membrane as a helical segment. N-linked (GlcNAc...) asparagine glycans are attached at residues Asn78, Asn104, and Asn117. Transmembrane regions (helical) follow at residues 126 to 146 (YFCT…VYDL), 173 to 193 (ILLD…MVKI), 204 to 224 (SVRW…TISV), 226 to 246 (FVGL…LWLI), and 266 to 286 (IALI…HLSV). N-linked (GlcNAc...) asparagine glycosylation is found at Asn288 and Asn312. MIR domains follow at residues 316–372 (PRDV…IKPH), 382–438 (LQLL…VLIV), and 443–499 (NETV…VEDN). Asn443 is a glycosylation site (N-linked (GlcNAc...) asparagine). 4 consecutive transmembrane segments (helical) span residues 572–592 (IWWS…GNAI), 645–665 (LGAA…FWAM), 669–689 (LYFH…GVMF), and 703–723 (VLLG…SPLA). Asn735 is a glycosylation site (N-linked (GlcNAc...) asparagine).

The protein belongs to the glycosyltransferase 39 family. Interacts with Rt/POMT1.

It is found in the endoplasmic reticulum membrane. It catalyses the reaction a di-trans,poly-cis-dolichyl beta-D-mannosyl phosphate + L-seryl-[protein] = 3-O-(alpha-D-mannosyl)-L-seryl-[protein] + a di-trans,poly-cis-dolichyl phosphate + H(+). The enzyme catalyses a di-trans,poly-cis-dolichyl beta-D-mannosyl phosphate + L-threonyl-[protein] = 3-O-(alpha-D-mannosyl)-L-threonyl-[protein] + a di-trans,poly-cis-dolichyl phosphate + H(+). Its pathway is protein modification; protein glycosylation. In terms of biological role, rt/POMT1 and tw/POMT2 function as a protein O-mannosyltransferase in association with each other to generate and maintain normal muscle development. The sequence is that of Protein O-mannosyl-transferase 2 from Drosophila pseudoobscura pseudoobscura (Fruit fly).